Consider the following 331-residue polypeptide: Olfactory receptor 7E178 (331 aa).

Over 1 to 47 the chain is Extracellular; that stretch reads MMDRYSFIMHQHRDDTVWCPSKIEEQNITRISEFHLMGLSDDLQLQP. N-linked (GlcNAc...) asparagine glycosylation is present at Asn27. A helical transmembrane segment spans residues 48–68; the sequence is ILFGLFLSMYLVTLLGNLLII. Residues 69 to 80 are Cytoplasmic-facing; it reads LTVSSDSHLHSP. Residues 81–100 form a helical membrane-spanning segment; it reads MYFFLSNLSLADVSFTSTTL. The Extracellular segment spans residues 101 to 119; that stretch reads PKMIVDIQTHNRAISYSGC. A disulfide bond links Cys119 and Cys201. Residues 120 to 140 form a helical membrane-spanning segment; it reads LTQMSFFMLFGCLDSLLLTAM. Over 141–164 the chain is Cytoplasmic; it reads AYDRFVAICHPLHYQFIMNPRLCG. The chain crosses the membrane as a helical span at residues 165 to 185; sequence LLVFLSVLISLFVSQLHNSVV. The Extracellular portion of the chain corresponds to 186-218; it reads LQLTYFKSVDISHFFCDPSQLLNLACSDTFTNN. Residues 219 to 239 traverse the membrane as a helical segment; sequence IVMYFVGAISGFLPISGIFFS. Residues 240 to 266 lie on the Cytoplasmic side of the membrane; that stretch reads YYKIVSSILRMPSPGGKYKAFSTCGSH. A helical membrane pass occupies residues 267-287; it reads LSVVCLFYGTGLGVYLSSAVS. The Extracellular portion of the chain corresponds to 288–293; sequence LSPRKG. The helical transmembrane segment at 294-314 threads the bilayer; it reads AVASIVYTVVTPMLNPFIYSL. Topologically, residues 315–331 are cytoplasmic; that stretch reads RNQDIKRAMWRLLRKTV.

Belongs to the G-protein coupled receptor 1 family.

It localises to the cell membrane. In terms of biological role, odorant receptor. The sequence is that of Olfactory receptor 7E178 from Mus musculus (Mouse).